Here is a 122-residue protein sequence, read N- to C-terminus: Large ribosomal subunit protein uL14 (122 aa).

It belongs to the universal ribosomal protein uL14 family. Part of the 50S ribosomal subunit. Forms a cluster with proteins L3 and L19. In the 70S ribosome, L14 and L19 interact and together make contacts with the 16S rRNA in bridges B5 and B8.

Its function is as follows. Binds to 23S rRNA. Forms part of two intersubunit bridges in the 70S ribosome. The polypeptide is Large ribosomal subunit protein uL14 (Halothermothrix orenii (strain H 168 / OCM 544 / DSM 9562)).